A 143-amino-acid polypeptide reads, in one-letter code: Large ribosomal subunit protein uL11 (143 aa).

The protein belongs to the universal ribosomal protein uL11 family. Part of the ribosomal stalk of the 50S ribosomal subunit. Interacts with L10 and the large rRNA to form the base of the stalk. L10 forms an elongated spine to which L12 dimers bind in a sequential fashion forming a multimeric L10(L12)X complex. Post-translationally, one or more lysine residues are methylated.

In terms of biological role, forms part of the ribosomal stalk which helps the ribosome interact with GTP-bound translation factors. The sequence is that of Large ribosomal subunit protein uL11 from Burkholderia multivorans (strain ATCC 17616 / 249).